The sequence spans 151 residues: Small ribosomal subunit protein uS11A (151 aa).

The tract at residues D131–L151 is disordered. Residues R142–L151 show a composition bias toward basic residues.

Belongs to the universal ribosomal protein uS11 family.

The polypeptide is Small ribosomal subunit protein uS11A (Drosophila melanogaster (Fruit fly)).